The following is a 316-amino-acid chain: 4-hydroxy-3-methylbut-2-enyl diphosphate reductase (316 aa).

Residue Cys-12 coordinates [4Fe-4S] cluster. 2 residues coordinate (2E)-4-hydroxy-3-methylbut-2-enyl diphosphate: His-41 and His-74. 2 residues coordinate dimethylallyl diphosphate: His-41 and His-74. Residues His-41 and His-74 each coordinate isopentenyl diphosphate. Cys-96 is a [4Fe-4S] cluster binding site. His-124 provides a ligand contact to (2E)-4-hydroxy-3-methylbut-2-enyl diphosphate. His-124 contributes to the dimethylallyl diphosphate binding site. His-124 contacts isopentenyl diphosphate. The Proton donor role is filled by Glu-126. Thr-169 is a (2E)-4-hydroxy-3-methylbut-2-enyl diphosphate binding site. Cys-199 contributes to the [4Fe-4S] cluster binding site. Ser-227, Ser-228, Asn-229, and Ser-271 together coordinate (2E)-4-hydroxy-3-methylbut-2-enyl diphosphate. Ser-227, Ser-228, Asn-229, and Ser-271 together coordinate dimethylallyl diphosphate. 4 residues coordinate isopentenyl diphosphate: Ser-227, Ser-228, Asn-229, and Ser-271.

It belongs to the IspH family. It depends on [4Fe-4S] cluster as a cofactor.

The catalysed reaction is isopentenyl diphosphate + 2 oxidized [2Fe-2S]-[ferredoxin] + H2O = (2E)-4-hydroxy-3-methylbut-2-enyl diphosphate + 2 reduced [2Fe-2S]-[ferredoxin] + 2 H(+). It carries out the reaction dimethylallyl diphosphate + 2 oxidized [2Fe-2S]-[ferredoxin] + H2O = (2E)-4-hydroxy-3-methylbut-2-enyl diphosphate + 2 reduced [2Fe-2S]-[ferredoxin] + 2 H(+). It functions in the pathway isoprenoid biosynthesis; dimethylallyl diphosphate biosynthesis; dimethylallyl diphosphate from (2E)-4-hydroxy-3-methylbutenyl diphosphate: step 1/1. It participates in isoprenoid biosynthesis; isopentenyl diphosphate biosynthesis via DXP pathway; isopentenyl diphosphate from 1-deoxy-D-xylulose 5-phosphate: step 6/6. In terms of biological role, catalyzes the conversion of 1-hydroxy-2-methyl-2-(E)-butenyl 4-diphosphate (HMBPP) into a mixture of isopentenyl diphosphate (IPP) and dimethylallyl diphosphate (DMAPP). Acts in the terminal step of the DOXP/MEP pathway for isoprenoid precursor biosynthesis. In Xanthomonas campestris pv. campestris (strain 8004), this protein is 4-hydroxy-3-methylbut-2-enyl diphosphate reductase.